Here is a 120-residue protein sequence, read N- to C-terminus: UPF0342 protein Csac_0863 (120 aa).

Belongs to the UPF0342 family.

This Caldicellulosiruptor saccharolyticus (strain ATCC 43494 / DSM 8903 / Tp8T 6331) protein is UPF0342 protein Csac_0863.